The sequence spans 167 residues: UPF0225 protein VP1145 (167 aa).

The protein belongs to the UPF0225 family.

This chain is UPF0225 protein VP1145, found in Vibrio parahaemolyticus serotype O3:K6 (strain RIMD 2210633).